The following is a 133-amino-acid chain: Profilin-3 (133 aa).

This sequence belongs to the profilin family. As to quaternary structure, occurs in many kinds of cells as a complex with monomeric actin in a 1:1 ratio.

The protein localises to the cytoplasm. The protein resides in the cytoskeleton. Functionally, binds to actin and affects the structure of the cytoskeleton. At high concentrations, profilin prevents the polymerization of actin, whereas it enhances it at low concentrations. By binding to PIP2, it inhibits the formation of IP3 and DG. In Nicotiana tabacum (Common tobacco), this protein is Profilin-3 (PRO3).